A 214-amino-acid chain; its full sequence is Pyridoxine/pyridoxamine 5'-phosphate oxidase (214 aa).

Residues 9–12 (RREY) and Lys67 each bind substrate. Residues 62–67 (RTVLLK), 77–78 (YS), Arg83, Lys84, and Gln106 each bind FMN. Tyr124, Arg128, and Ser132 together coordinate substrate. FMN-binding positions include 141-142 (QS) and Trp186. Residue 192-194 (RLH) participates in substrate binding. An FMN-binding site is contributed by Arg196.

It belongs to the pyridoxamine 5'-phosphate oxidase family. As to quaternary structure, homodimer. It depends on FMN as a cofactor.

It carries out the reaction pyridoxamine 5'-phosphate + O2 + H2O = pyridoxal 5'-phosphate + H2O2 + NH4(+). The catalysed reaction is pyridoxine 5'-phosphate + O2 = pyridoxal 5'-phosphate + H2O2. It functions in the pathway cofactor metabolism; pyridoxal 5'-phosphate salvage; pyridoxal 5'-phosphate from pyridoxamine 5'-phosphate: step 1/1. It participates in cofactor metabolism; pyridoxal 5'-phosphate salvage; pyridoxal 5'-phosphate from pyridoxine 5'-phosphate: step 1/1. Its function is as follows. Catalyzes the oxidation of either pyridoxine 5'-phosphate (PNP) or pyridoxamine 5'-phosphate (PMP) into pyridoxal 5'-phosphate (PLP). This chain is Pyridoxine/pyridoxamine 5'-phosphate oxidase, found in Porphyromonas gingivalis (strain ATCC 33277 / DSM 20709 / CIP 103683 / JCM 12257 / NCTC 11834 / 2561).